The following is a 151-amino-acid chain: Ribosome maturation factor RimP (151 aa).

Belongs to the RimP family.

The protein resides in the cytoplasm. In terms of biological role, required for maturation of 30S ribosomal subunits. In Shewanella sp. (strain MR-4), this protein is Ribosome maturation factor RimP.